We begin with the raw amino-acid sequence, 317 residues long: Ribosomal RNA small subunit methyltransferase H (317 aa).

S-adenosyl-L-methionine contacts are provided by residues 39–41 (GGH), Asp59, Phe83, Asp104, and Gln111.

This sequence belongs to the methyltransferase superfamily. RsmH family.

It is found in the cytoplasm. It carries out the reaction cytidine(1402) in 16S rRNA + S-adenosyl-L-methionine = N(4)-methylcytidine(1402) in 16S rRNA + S-adenosyl-L-homocysteine + H(+). Specifically methylates the N4 position of cytidine in position 1402 (C1402) of 16S rRNA. The protein is Ribosomal RNA small subunit methyltransferase H of Paraburkholderia xenovorans (strain LB400).